A 157-amino-acid polypeptide reads, in one-letter code: Protein BeeE (157 aa).

This sequence belongs to the phage portal family.

In Escherichia coli (strain K12), this protein is Protein BeeE (beeE).